The following is a 2731-amino-acid chain: Putative mediator of RNA polymerase II transcription subunit 12 (2731 aa).

Coiled-coil stretches lie at residues Gln5–Gln37, His75–His108, Gln141–Gln189, and Ile275–Gln304. Disordered regions lie at residues Gln29 to His57 and Gln101 to Gln145. Residues Gln310–Pro320 are compositionally biased toward low complexity. Disordered stretches follow at residues Gln310 to Ser376, Thr432 to Pro451, Leu685 to Gln708, and Arg1251 to Ser1341. Over residues Gln327–Ile337 the composition is skewed to polar residues. Basic and acidic residues predominate over residues Lys347–Gly361. Residues Gly688 to Ser701 are compositionally biased toward basic residues. Residues Arg1251 to Asn1268 are compositionally biased toward low complexity. 2 stretches are compositionally biased toward acidic residues: residues Asn1275–Glu1298 and Asn1305–Met1326. 2 coiled-coil regions span residues Glu1316–Asn1344 and Lys1375–Leu1433. Disordered stretches follow at residues His1778–Gly1825, Thr1892–Thr1958, Ser2212–Lys2258, Thr2307–Gln2351, Glu2472–Thr2532, and His2705–Lys2731. 9 stretches are compositionally biased toward low complexity: residues Glu1783–Asn1824, Thr1892–Thr1909, Asn1916–Thr1958, Ser2212–Gln2250, Thr2307–Ser2322, Gln2337–Gln2351, Glu2472–Leu2501, Leu2508–Thr2532, and His2705–Gln2720. A coiled-coil region spans residues Thr2239 to Ser2270. Positions Leu2336–Gln2363 form a coiled coil. Positions Gln2523 to Leu2662 form a coiled coil. Residues Lys2721–Lys2731 show a composition bias toward polar residues.

It belongs to the Mediator complex subunit 12 family. In terms of assembly, component of the Mediator complex.

The protein localises to the nucleus. Functionally, component of the Mediator complex, a coactivator involved in the regulated transcription of nearly all RNA polymerase II-dependent genes. Mediator functions as a bridge to convey information from gene-specific regulatory proteins to the basal RNA polymerase II transcription machinery. Mediator is recruited to promoters by direct interactions with regulatory proteins and serves as a scaffold for the assembly of a functional preinitiation complex with RNA polymerase II and the general transcription factors. The sequence is that of Putative mediator of RNA polymerase II transcription subunit 12 (med12) from Dictyostelium discoideum (Social amoeba).